Here is a 399-residue protein sequence, read N- to C-terminus: Forkhead box protein A4-A (399 aa).

A DNA-binding region (fork-head) is located at residues Lys119–Lys213. Residues Arg219–Glu234 show a composition bias toward basic and acidic residues. Residues Arg219–Ala290 form a disordered region. Residues Ser267 to Gly277 are compositionally biased toward polar residues.

During stages 8.5 to 10, expressed in the part of the dorsal mesoderm invaginating the dorsal blastopore lip (Spemann organizer), as a direct response to dorsal mesodermal induction. At stage 12 (mid-gastrulation), restricted to the dorsal midline in the deeper layers of mesodermal cells. Continuously present in the posterior portion of invaginated mesoderm and expressed within the notochord. Also present in the midline of the neural plate during gastrulation, but absent from the notoplate in exogastrula embryos. Expression in the notochord continues in neurula-stage embryos and at stage 20 in addition to the notochord, expression is seen in the pharyngeal endoderm.

The protein resides in the nucleus. Transcriptional repressor involved in embryonic nervous system development. Plays a role in the induction and patterning of the anterior-posterior neural axis. Involved in the establishment of floor plate differentiation from neural plate cells during gastrulation. Binds the anf1 promoter sequence to restrict expression of anf1 to the anterior of the neural plate, thereby patterning the forebrain. Can bind to the HNF-3-alpha DNA target sequence. Cooperates with t/bra in a dose-dependent manner to specify dorsal mesoderm formation, including notochord. Binds to DNA via the target sequence 5'-[GA]TAAA[TC]A-3', with 5'-GTAAATA-3' being the preferred binding site. In Xenopus laevis (African clawed frog), this protein is Forkhead box protein A4-A (foxa4-a).